Consider the following 379-residue polypeptide: Anhydro-N-acetylmuramic acid kinase (379 aa).

An ATP-binding site is contributed by 9-16 (GTSADGVD).

The protein belongs to the anhydro-N-acetylmuramic acid kinase family.

The catalysed reaction is 1,6-anhydro-N-acetyl-beta-muramate + ATP + H2O = N-acetyl-D-muramate 6-phosphate + ADP + H(+). Its pathway is amino-sugar metabolism; 1,6-anhydro-N-acetylmuramate degradation. It functions in the pathway cell wall biogenesis; peptidoglycan recycling. Functionally, catalyzes the specific phosphorylation of 1,6-anhydro-N-acetylmuramic acid (anhMurNAc) with the simultaneous cleavage of the 1,6-anhydro ring, generating MurNAc-6-P. Is required for the utilization of anhMurNAc either imported from the medium or derived from its own cell wall murein, and thus plays a role in cell wall recycling. This is Anhydro-N-acetylmuramic acid kinase from Prochlorococcus marinus (strain MIT 9303).